The chain runs to 407 residues: Phosphoglycerate kinase (407 aa).

Substrate contacts are provided by residues 21–23, Arg36, 59–62, Arg116, and Arg156; these read DLN and HQGR. ATP-binding positions include Glu332 and 358–361; that span reads GGDT.

This sequence belongs to the phosphoglycerate kinase family. In terms of assembly, monomer.

It is found in the cytoplasm. It carries out the reaction (2R)-3-phosphoglycerate + ATP = (2R)-3-phospho-glyceroyl phosphate + ADP. Its pathway is carbohydrate degradation; glycolysis; pyruvate from D-glyceraldehyde 3-phosphate: step 2/5. In Halorubrum lacusprofundi (strain ATCC 49239 / DSM 5036 / JCM 8891 / ACAM 34), this protein is Phosphoglycerate kinase.